We begin with the raw amino-acid sequence, 1638 residues long: Chromatin-remodeling ATPase INO80 (1638 aa).

Residues 41 to 93 (SLRKPLSSDEETDDEHVVKREHDVQDSDDSSTVGVVRMKQSSKRKSRLLASKE) are disordered. A phosphoserine mark is found at Ser-47 and Ser-48. Thr-52 carries the post-translational modification Phosphothreonine. The span at 55 to 65 (EHVVKREHDVQ) shows a compositional bias: basic and acidic residues. A phosphoserine mark is found at Ser-67 and Ser-70. Residues 136-161 (VQQLLREHVREQRQRKNYYKKAANAQ) are a coiled coil. A disordered region spans residues 201–259 (RLAEAQAGPKPPKQRRRGRKKRDNMGSPESGEVPPSELGKYTFGDTLPNNEDDDEDGGE). A compositionally biased stretch (basic residues) spans 212 to 222 (PKQRRRGRKKR). Phosphoserine is present on residues Ser-227 and Ser-230. The segment covering 250–259 (NEDDDEDGGE) has biased composition (acidic residues). In terms of domain architecture, DBINO spans 313–438 (IWQIMSKKES…AHFMSKKLGQ (126 aa)). The tract at residues 499-528 (KEKEEEEQAQESVEDIKPEPRPEMKDLPQP) is disordered. Acidic residues predominate over residues 502–511 (EEEEQAQESV). Basic and acidic residues predominate over residues 512-526 (EDIKPEPRPEMKDLP). The Helicase ATP-binding domain occupies 547 to 718 (ANIYDQGISG…WALLHFIMPT (172 aa)). 560 to 567 (DEMGLGKT) is an ATP binding site. Residues 1160–1315 (VLDNLLTRLK…GGNFKPDTLK (156 aa)) form the Helicase C-terminal domain. Disordered regions lie at residues 1335–1364 (QEAK…DVNM) and 1463–1638 (FLDD…VGPE). Over residues 1338–1350 (KLQSSSPIPAATQ) the composition is skewed to polar residues. A compositionally biased stretch (basic residues) spans 1473 to 1495 (MRRRHHPRGTRRGRPRGSTRRGG). 2 stretches are compositionally biased toward low complexity: residues 1505-1534 (TPTQ…GTSS) and 1618-1627 (SPATSRAPSP).

It belongs to the SNF2/RAD54 helicase family. In terms of assembly, component of the chromatin remodeling Ino80 complex.

Its subcellular location is the nucleus. The catalysed reaction is ATP + H2O = ADP + phosphate + H(+). ATPase component of the chromatin remodeling INO80 complex which is involved in transcriptional regulation, DNA replication and DNA repair. Binds DNA. As part of the INO80 complex, remodels chromatin by shifting nucleosomes. This Drosophila melanogaster (Fruit fly) protein is Chromatin-remodeling ATPase INO80.